Consider the following 140-residue polypeptide: Thioredoxin H9 (140 aa).

Gly2 carries N-myristoyl glycine lipidation. Cys4 is lipidated: S-palmitoyl cysteine. Ser14 is subject to Phosphoserine. One can recognise a Thioredoxin domain in the interval 25 to 129 (VHLITTKESW…PELQKKVTSI (105 aa)). Active-site nucleophile residues include Cys57 and Cys60. A disulfide bridge connects residues Cys57 and Cys60. Residue Ser136 is modified to Phosphoserine.

The protein belongs to the thioredoxin family. Plant H-type subfamily. In terms of tissue distribution, ubiquitous.

The protein localises to the cell membrane. Its function is as follows. Probable thiol-disulfide oxidoreductase that may play a role in intercellular communication due to its ability to move from cell to cell. The protein is Thioredoxin H9 (TRX9) of Arabidopsis thaliana (Mouse-ear cress).